A 439-amino-acid chain; its full sequence is Polygalacturonase QRT2 (439 aa).

A signal peptide spans 1-21; it reads MYEKIIILSVFLLTFLPSCFS. Residues 43-69 are disordered; sequence RQHQHGHNTRNSHLKNRHGYAPRSSPR. The segment covering 44–62 has biased composition (basic residues); it reads QHQHGHNTRNSHLKNRHGY. PbH1 repeat units lie at residues 201–250 and 251–272; these read CNNL…HVSG and TQNILIQDSIVRTGDDCISIVS. Aspartate 265 serves as the catalytic Proton donor. Histidine 288 is a catalytic residue. PbH1 repeat units follow at residues 304–325 and 333–354; these read VSNVVVNKATLIGTTNGVRIKT and AKNIIFQDIIMKNVTNPIIINQ.

This sequence belongs to the glycosyl hydrolase 28 family. Expressed predominantly in roots with lower expression levels in rosette leaves, flower buds and siliques. Bearly detected in seeds. Found in flowers undergoing floral organ abscission. Also expressed early in anther development, at the time of microspore separation.

The protein localises to the secreted. Its subcellular location is the cell wall. The catalysed reaction is (1,4-alpha-D-galacturonosyl)n+m + H2O = (1,4-alpha-D-galacturonosyl)n + (1,4-alpha-D-galacturonosyl)m.. Functionally, polygalacturonase required for cell type-specific pectin degradation to separate microspores. Involved in anther dehiscence and floral organ abscission. In Arabidopsis thaliana (Mouse-ear cress), this protein is Polygalacturonase QRT2 (QRT2).